Consider the following 87-residue polypeptide: NADH dehydrogenase [ubiquinone] 1 alpha subcomplex subunit 4-like 2 (87 aa).

This sequence belongs to the complex I NDUFA4 subunit family.

The protein is NADH dehydrogenase [ubiquinone] 1 alpha subcomplex subunit 4-like 2 (NDUFA4L2) of Bos taurus (Bovine).